Reading from the N-terminus, the 1172-residue chain is Laminin subunit beta-3 (1172 aa).

Positions 1-17 are cleaved as a signal peptide; that stretch reads MRPFFLLCFALPGLLHA. Positions 22–249 constitute a Laminin N-terminal domain; the sequence is SRGACYPPVG…AVSQLRLQGS (228 aa). Asparagine 220 is a glycosylation site (N-linked (GlcNAc...) asparagine). 24 disulfides stabilise this stretch: cysteine 250/cysteine 259, cysteine 252/cysteine 279, cysteine 281/cysteine 290, cysteine 293/cysteine 313, cysteine 316/cysteine 325, cysteine 318/cysteine 343, cysteine 346/cysteine 355, cysteine 358/cysteine 376, cysteine 379/cysteine 392, cysteine 381/cysteine 399, cysteine 401/cysteine 410, cysteine 413/cysteine 428, cysteine 431/cysteine 444, cysteine 433/cysteine 451, cysteine 453/cysteine 462, cysteine 465/cysteine 478, cysteine 481/cysteine 493, cysteine 483/cysteine 500, cysteine 502/cysteine 511, cysteine 519/cysteine 531, cysteine 534/cysteine 546, cysteine 536/cysteine 553, cysteine 555/cysteine 564, and cysteine 567/cysteine 578. Laminin EGF-like domains lie at 250–315, 316–378, 379–430, 431–480, 481–533, and 534–580; these read CFCH…ECQR, CDCN…TCIS, CECD…GCHR, CDCN…GCEP, CACD…GCRA, and CDCD…VCVA. Residues 579–785 form a domain II region; the sequence is VACHPCFQTY…SLPDLTPTFN (207 aa). Residue asparagine 604 is glycosylated (N-linked (GlcNAc...) asparagine). Residues 723–757 adopt a coiled-coil conformation; sequence EQSAQAAQQVSDSSRLLDQLRDSRREAERLVRQAG. Residues 786-816 form a domain alpha region; sequence KLCGNSRQMACTPISCPGELCPQDNGTACGS. Asparagine 810 carries N-linked (GlcNAc...) asparagine glycosylation. Residues 817–1170 form a domain I region; sequence RCRGVLPRAG…INGRVLYYAT (354 aa). 2 coiled-coil regions span residues 831-884 and 948-1133; these read MAGQ…MEED and VLSQ…ELEL.

Laminin is a complex glycoprotein, consisting of three different polypeptide chains (alpha, beta, gamma), which are bound to each other by disulfide bonds into a cross-shaped molecule comprising one long and three short arms with globules at each end. Beta-3 is a subunit of laminin-5 (laminin-332 or epiligrin/kalinin/nicein). Interacts with ECM1. As to expression, found in the basement membranes (major component).

It localises to the secreted. It is found in the extracellular space. Its subcellular location is the extracellular matrix. The protein localises to the basement membrane. Binding to cells via a high affinity receptor, laminin is thought to mediate the attachment, migration and organization of cells into tissues during embryonic development by interacting with other extracellular matrix components. In Homo sapiens (Human), this protein is Laminin subunit beta-3 (LAMB3).